The chain runs to 1235 residues: High-affinity potassium transport protein (1235 aa).

A Phosphoserine modification is found at Ser-15. 2 consecutive transmembrane segments (helical) span residues 49–70 and 78–98; these read SFIA…ILLY and IDTL…TVDI. N-linked (GlcNAc...) asparagine glycosylation is present at Asn-100. A helical membrane pass occupies residues 107 to 127; sequence IVLYIVCCISTPIAVHSCLAF. 4 disordered regions span residues 161-310, 323-344, 361-441, and 488-565; these read LTAR…SPAD, EATA…GTRY, KIKI…TKPP, and RLST…HQLQ. Positions 164 to 179 are enriched in polar residues; that stretch reads RTMTKNRTGTQRTSYP. Asn-169 carries an N-linked (GlcNAc...) asparagine glycan. Residues 198-217 show a composition bias toward basic and acidic residues; sequence VNRDEQDSVHSDQNSHDISR. A compositionally biased stretch (low complexity) spans 219–232; that stretch reads SSNNNTNHNGSSGS. Residues Asn-222 and Asn-227 are each glycosylated (N-linked (GlcNAc...) asparagine). Residues 237 to 247 show a composition bias toward acidic residues; the sequence is VKEDETDDNGE. Polar residues predominate over residues 248–274; that stretch reads YQENNSYSTVGSSSNTVADESLNQKPK. Residue Asn-251 is glycosylated (N-linked (GlcNAc...) asparagine). Asn-369 and Asn-383 each carry an N-linked (GlcNAc...) asparagine glycan. Composition is skewed to polar residues over residues 370-415 and 490-502; these read ESNT…SNSG and STGS…SNNV. A Phosphoserine modification is found at Ser-414. 3 N-linked (GlcNAc...) asparagine glycosylation sites follow: Asn-497, Asn-501, and Asn-532. Residues 510 to 539 show a composition bias toward acidic residues; it reads DMDDDDDDDDNDGDNNEEYFADNESGDEDE. Ser-534 bears the Phosphoserine mark. The segment covering 540–563 has biased composition (basic and acidic residues); it reads RVQQSEPHSDSELKSHQQQQEKHQ. N-linked (GlcNAc...) asparagine glycans are attached at residues Asn-580 and Asn-677. Residues 671-706 are disordered; sequence HDGSHKNGSEEASSDSNENIYSTNGGSDHNGLNNYP. Polar residues predominate over residues 680–706; that stretch reads EEASSDSNENIYSTNGGSDHNGLNNYP. Helical transmembrane passes span 778–800, 813–834, 838–858, 862–882, and 898–918; these read ILVV…WIIL, VSPT…GLTL, SMMS…FIII, GFPI…PDLS, and CFTL…LAGL. An N-linked (GlcNAc...) asparagine glycan is attached at Asn-919. Transmembrane regions (helical) follow at residues 923-943 and 971-991; these read WILF…SKGY and SIQV…AISI. Residues 1003 to 1063 are disordered; it reads GLYGDMGGEP…KKKKKTENPN (61 aa). Residues 1010–1031 show a composition bias toward acidic residues; sequence GEPEDTDTEDDGNDEDDDEENE. An N-linked (GlcNAc...) asparagine glycan is attached at Asn-1030. A compositionally biased stretch (low complexity) spans 1036–1049; that stretch reads QSSQRSSSNNNNNN. The next 2 helical transmembrane spans lie at 1078 to 1098 and 1111 to 1131; these read QLSF…ICEG and IFAI…SLGY. An N-linked (GlcNAc...) asparagine glycan is attached at Asn-1135.

Belongs to the TrkH potassium transport family.

The protein resides in the membrane. This protein is required for high-affinity potassium transport. In Saccharomyces cerevisiae (strain ATCC 204508 / S288c) (Baker's yeast), this protein is High-affinity potassium transport protein (TRK1).